We begin with the raw amino-acid sequence, 389 residues long: Ecto-ADP-ribosyltransferase 3 (389 aa).

Residues 1–26 form the signal peptide; sequence MKTGHFEIVTMLLATMILVDIFQVKA. The cysteines at positions 43 and 256 are disulfide-linked. One can recognise a TR mART core domain in the interval 64-251; the sequence is QQLDTVWENA…LILQSINKTC (188 aa). NAD(+) is bound by residues Y101 and R163. An N-linked (GlcNAc...) asparagine glycan is attached at N248. Repeat copies occupy residues 283–292, 293–302, and 303–312. Positions 283 to 312 are 3 X 10 AA tandem repeats of [GS]-E-K-N-[QW]-K-L-E-D-H; sequence GEKNQKLEDHSEKNWKLEDHGEKNQKLEDH. Residues 325 to 362 form a disordered region; that stretch reads MKIPEPFPLPEDKSQGNINNPTPGPVPVPGPKSHPSAS. A glycan (O-linked (GalNAc...) threonine) is linked at T346. Pro residues predominate over residues 346 to 356; it reads TPGPVPVPGPK. The GPI-anchor amidated serine moiety is linked to residue S362. The propeptide at 363-389 is removed in mature form; sequence SGKLLLPQFGMVIILISVSAINLFVAL.

It belongs to the Arg-specific ADP-ribosyltransferase family. O-glycosylated with core 1 or possibly core 8 glycans. Testis specific.

It is found in the cell membrane. The enzyme catalyses L-arginyl-[protein] + NAD(+) = N(omega)-(ADP-D-ribosyl)-L-arginyl-[protein] + nicotinamide + H(+). This Homo sapiens (Human) protein is Ecto-ADP-ribosyltransferase 3 (ART3).